Reading from the N-terminus, the 688-residue chain is GTPase IMAP family member 8 (688 aa).

Residues 22 to 44 (TSIGQGERPRASRGQESNFKQSQ) form a disordered region. Polar residues predominate over residues 35–44 (GQESNFKQSQ). AIG1-type G domains lie at 46 to 246 (TSTL…TENS), 281 to 471 (TPEL…VIRE), and 472 to 681 (KELL…SAVG). The tract at residues 55–62 (GKQGAGKS) is G1. GTP contacts are provided by residues 55 to 63 (GKQGAGKSA) and serine 76. Positions 82 to 86 (MVTKR) are G2. A G3 region spans residues 103–106 (DTPD). Residues 171–174 (TRED) are G4. GTP contacts are provided by residues 172 to 174 (RED) and asparagine 208. Residues 207-209 (NNK) are G5.

This sequence belongs to the TRAFAC class TrmE-Era-EngA-EngB-Septin-like GTPase superfamily. AIG1/Toc34/Toc159-like paraseptin GTPase family. IAN subfamily. As to expression, spleen, thymus and T-cells. Greatly reduced in T-cells from lymphopenic rats.

It localises to the endoplasmic reticulum. Its subcellular location is the golgi apparatus. It is found in the mitochondrion. The protein resides in the cytoplasm. The protein localises to the cytosol. In terms of biological role, exerts an anti-apoptotic effect in the immune system and is involved in responses to infections. This Rattus norvegicus (Rat) protein is GTPase IMAP family member 8 (Gimap8).